Reading from the N-terminus, the 166-residue chain is Large ribosomal subunit protein uL10 (166 aa).

Belongs to the universal ribosomal protein uL10 family. Part of the ribosomal stalk of the 50S ribosomal subunit. The N-terminus interacts with L11 and the large rRNA to form the base of the stalk. The C-terminus forms an elongated spine to which L12 dimers bind in a sequential fashion forming a multimeric L10(L12)X complex.

Functionally, forms part of the ribosomal stalk, playing a central role in the interaction of the ribosome with GTP-bound translation factors. The polypeptide is Large ribosomal subunit protein uL10 (rplJ) (Streptococcus pyogenes serotype M18 (strain MGAS8232)).